Reading from the N-terminus, the 79-residue chain is ATP synthase subunit 9, mitochondrial (79 aa).

2 consecutive transmembrane segments (helical) span residues S21 to F41 and F59 to I79.

It belongs to the ATPase C chain family. F-type ATPases have 2 components, CF(1) - the catalytic core - and CF(0) - the membrane proton channel. CF(1) has five subunits: alpha(3), beta(3), gamma(1), delta(1), epsilon(1). CF(0) has three main subunits: a, b and c.

The protein resides in the mitochondrion membrane. Its function is as follows. Mitochondrial membrane ATP synthase (F(1)F(0) ATP synthase or Complex V) produces ATP from ADP in the presence of a proton gradient across the membrane which is generated by electron transport complexes of the respiratory chain. F-type ATPases consist of two structural domains, F(1) - containing the extramembraneous catalytic core and F(0) - containing the membrane proton channel, linked together by a central stalk and a peripheral stalk. During catalysis, ATP synthesis in the catalytic domain of F(1) is coupled via a rotary mechanism of the central stalk subunits to proton translocation. Part of the complex F(0) domain. A homomeric c-ring of probably 10 subunits is part of the complex rotary element. In Acanthamoeba castellanii (Amoeba), this protein is ATP synthase subunit 9, mitochondrial (ATP9).